The primary structure comprises 374 residues: MANQVIKCKAAVAWEAGKPLSIEEVEVAPPKAHEVRIKIIATAVCHTDAYTLSGADPEGNYPVILGHEGAGIVESVGEGVTKLKAGDTVIPLYIPQCGECKFCLNPKTNLCQKIRVTQGKGLMPDGTSRFTCKGKTILHYMGTSTFSEYTVVADISVAKIDPLAPLDKVCLLGCGISTGYGAALNAAKVEPGSTCAVFGLGGVGLAVIMGCKMAGAARIIGVDINKDKFARAKEFGASECINPQDFSKPIQEVLIEMTDGGVDYSFECIGNVKVMRAALEACHKGWGISVVVGVAASGEEIATRPFQLVTGRTWKGTAFGGWKSVESVPKLVSEYMSKKIKVDEFVTHSLPFDQINEAFDLMHAGKSIRTVVKL.

The residue at position 2 (alanine 2) is an N-acetylalanine. Residues cysteine 45, histidine 67, cysteine 97, cysteine 100, cysteine 103, cysteine 111, and cysteine 174 each contribute to the Zn(2+) site. At lysine 233 the chain carries N6-succinyllysine. Serine 247 bears the Phosphoserine mark. Residue lysine 315 is modified to N6-succinyllysine. The residue at position 324 (serine 324) is a Phosphoserine.

This sequence belongs to the zinc-containing alcohol dehydrogenase family. Class-III subfamily. In terms of assembly, homodimer. Zn(2+) is required as a cofactor.

The protein resides in the cytoplasm. It catalyses the reaction a primary alcohol + NAD(+) = an aldehyde + NADH + H(+). The enzyme catalyses a secondary alcohol + NAD(+) = a ketone + NADH + H(+). The catalysed reaction is S-(hydroxymethyl)glutathione + NADP(+) = S-formylglutathione + NADPH + H(+). It carries out the reaction S-(hydroxymethyl)glutathione + NAD(+) = S-formylglutathione + NADH + H(+). It catalyses the reaction 20-oxo-(5Z,8Z,11Z,14Z)-eicosatetraenoate + NAD(+) + H2O = (5Z,8Z,11Z,14Z)-eicosatetraenedioate + NADH + 2 H(+). The enzyme catalyses 20-hydroxy-(5Z,8Z,11Z,14Z)-eicosatetraenoate + NAD(+) = 20-oxo-(5Z,8Z,11Z,14Z)-eicosatetraenoate + NADH + H(+). The catalysed reaction is S-nitrosoglutathione + NADH + H(+) = S-(hydroxysulfenamide)glutathione + NAD(+). Functionally, catalyzes the oxidation of long-chain primary alcohols and the oxidation of S-(hydroxymethyl) glutathione. Also oxidizes long chain omega-hydroxy fatty acids, such as 20-HETE, producing both the intermediate aldehyde, 20-oxoarachidonate and the end product, a dicarboxylic acid, (5Z,8Z,11Z,14Z)-eicosatetraenedioate. Class-III ADH is remarkably ineffective in oxidizing ethanol. Required for clearance of cellular formaldehyde, a cytotoxic and carcinogenic metabolite that induces DNA damage. Also acts as a S-nitroso-glutathione reductase by catalyzing the NADH-dependent reduction of S-nitrosoglutathione, thereby regulating protein S-nitrosylation. The chain is Alcohol dehydrogenase class-3 from Bos taurus (Bovine).